Consider the following 103-residue polypeptide: Ig kappa-b4 chain C region (103 aa).

Residues 5-95 (PTVLIFPPAA…KVTQGTTSVV (91 aa)) enclose the Ig-like domain. Cysteines 26 and 85 form a disulfide.

This chain is Ig kappa-b4 chain C region, found in Oryctolagus cuniculus (Rabbit).